The following is a 173-amino-acid chain: Shikimate kinase (173 aa).

Glycine 14–threonine 19 contributes to the ATP binding site. A Mg(2+)-binding site is contributed by serine 18. The substrate site is built by aspartate 36, arginine 60, and glycine 82. Arginine 120 provides a ligand contact to ATP. Residue arginine 140 coordinates substrate. Glutamine 157 lines the ATP pocket.

The protein belongs to the shikimate kinase family. As to quaternary structure, monomer. It depends on Mg(2+) as a cofactor.

It localises to the cytoplasm. The catalysed reaction is shikimate + ATP = 3-phosphoshikimate + ADP + H(+). It functions in the pathway metabolic intermediate biosynthesis; chorismate biosynthesis; chorismate from D-erythrose 4-phosphate and phosphoenolpyruvate: step 5/7. Functionally, catalyzes the specific phosphorylation of the 3-hydroxyl group of shikimic acid using ATP as a cosubstrate. The sequence is that of Shikimate kinase from Baumannia cicadellinicola subsp. Homalodisca coagulata.